The chain runs to 79 residues: Small ribosomal subunit protein uS17 (79 aa).

Belongs to the universal ribosomal protein uS17 family. As to quaternary structure, part of the 30S ribosomal subunit.

Its function is as follows. One of the primary rRNA binding proteins, it binds specifically to the 5'-end of 16S ribosomal RNA. This is Small ribosomal subunit protein uS17 from Paramagnetospirillum magneticum (strain ATCC 700264 / AMB-1) (Magnetospirillum magneticum).